The primary structure comprises 330 residues: Tryptophan--tRNA ligase (330 aa).

ATP-binding positions include 10–12 (QAT) and 18–19 (GN). A 'HIGH' region motif is present at residues 11 to 19 (ATGSLHLGN). Asp-134 serves as a coordination point for L-tryptophan. Residues 146–148 (GED), Ile-186, and 195–199 (KMSKS) each bind ATP. A 'KMSKS' region motif is present at residues 195–199 (KMSKS).

It belongs to the class-I aminoacyl-tRNA synthetase family. Homodimer.

The protein localises to the cytoplasm. It carries out the reaction tRNA(Trp) + L-tryptophan + ATP = L-tryptophyl-tRNA(Trp) + AMP + diphosphate + H(+). Catalyzes the attachment of tryptophan to tRNA(Trp). The chain is Tryptophan--tRNA ligase from Rickettsia felis (strain ATCC VR-1525 / URRWXCal2) (Rickettsia azadi).